Reading from the N-terminus, the 183-residue chain is MVPSREFFEEEMDRVLENEAQKLSLTNLLKNVFAQTLDMKPEGVLTTEEALLAWLVDECKKEYLHQLIELVMQVPVSVEAPTTSAINNSLGIIRQTHGQGEDNFGRLLCSLSFASCFLELVLQSDERCLSVFASELAKFYVESQNLWLAYSGGLSAGLRERFPRSWLYFALKQKWLRFIYFFK.

This sequence belongs to the Bcl-2 family.

This is an uncharacterized protein from Equine herpesvirus 2 (strain 86/87) (EHV-2).